A 446-amino-acid chain; its full sequence is Exodeoxyribonuclease 7 large subunit (446 aa).

The protein belongs to the XseA family. Heterooligomer composed of large and small subunits.

The protein localises to the cytoplasm. The enzyme catalyses Exonucleolytic cleavage in either 5'- to 3'- or 3'- to 5'-direction to yield nucleoside 5'-phosphates.. Functionally, bidirectionally degrades single-stranded DNA into large acid-insoluble oligonucleotides, which are then degraded further into small acid-soluble oligonucleotides. This chain is Exodeoxyribonuclease 7 large subunit, found in Streptococcus gordonii (strain Challis / ATCC 35105 / BCRC 15272 / CH1 / DL1 / V288).